Reading from the N-terminus, the 225-residue chain is Red fluorescent protein drFP583 (225 aa).

The segment at residues 66 to 68 (QYG) is a cross-link (2-iminomethyl-5-imidazolinone (Gln-Gly)). Tyr-67 is modified ((Z)-2,3-didehydrotyrosine).

Belongs to the GFP family. As to quaternary structure, homotetramer. In terms of processing, contains a chromophore consisting of modified amino acid residues. The chromophore is formed by autocatalytic backbone condensation between Xaa-N and Gly-(N+2), oxidation of Tyr-(N+1) to didehydrotyrosine, and formation of a double bond to the alpha-amino nitrogen of residue Xaa-N. Maturation of the chromophore requires nothing other than molecular oxygen.

In terms of biological role, thought to play a role in photoprotection of the coral's resident symbiont microalgae's photosystems from photoinhibition caused by high light levels found near the surface of coral reefs. In deeper water, the fluorescence may be to convert blue light into longer wavelengths more suitable for use in photosynthesis by the microalgal symbionts. The chain is Red fluorescent protein drFP583 from Discosoma sp. (Sea anemone).